Here is a 154-residue protein sequence, read N- to C-terminus: Putative pre-16S rRNA nuclease (154 aa).

The protein belongs to the YqgF nuclease family.

It localises to the cytoplasm. Could be a nuclease involved in processing of the 5'-end of pre-16S rRNA. The sequence is that of Putative pre-16S rRNA nuclease from Rickettsia bellii (strain OSU 85-389).